Consider the following 676-residue polypeptide: F420-dependent formate dehydrogenase 2 subunit alpha (676 aa).

Residues phenylalanine 4–aspartate 60 enclose the 4Fe-4S Mo/W bis-MGD-type domain. Residues cysteine 11, cysteine 14, cysteine 18, and cysteine 46 each coordinate [4Fe-4S] cluster. Residue selenocysteine 133 is a non-standard amino acid, selenocysteine.

This sequence belongs to the prokaryotic molybdopterin-containing oxidoreductase family. Dimer of an alpha (FdhA2) and a beta (FdhB2) subunit. The cofactor is [4Fe-4S] cluster. Mo-bis(molybdopterin guanine dinucleotide) is required as a cofactor. It depends on Zn(2+) as a cofactor.

The catalysed reaction is oxidized coenzyme F420-(gamma-L-Glu)(n) + formate + 2 H(+) = reduced coenzyme F420-(gamma-L-Glu)(n) + CO2. Catalyzes the oxidation of formate to carbon dioxide, with coenzyme F420 as the electron acceptor. In vitro can also use methyl viologen as electron acceptor. The sequence is that of F420-dependent formate dehydrogenase 2 subunit alpha from Methanococcus maripaludis (strain DSM 14266 / JCM 13030 / NBRC 101832 / S2 / LL).